Consider the following 345-residue polypeptide: D-fructose 1,6-bisphosphatase class 2/sedoheptulose 1,7-bisphosphatase (345 aa).

Residues aspartate 33, glutamate 57, aspartate 97, and glutamate 100 each contribute to the Mn(2+) site. Substrate contacts are provided by residues 100–102 (EGT), tyrosine 131, 176–178 (RPR), and 198–200 (DGD). Glutamate 225 serves as a coordination point for Mn(2+).

It belongs to the FBPase class 2 family. In terms of assembly, homotetramer. The cofactor is Mn(2+).

It catalyses the reaction beta-D-fructose 1,6-bisphosphate + H2O = beta-D-fructose 6-phosphate + phosphate. The enzyme catalyses D-sedoheptulose 1,7-bisphosphate + H2O = D-sedoheptulose 7-phosphate + phosphate. It participates in carbohydrate biosynthesis; Calvin cycle. Catalyzes the hydrolysis of fructose 1,6-bisphosphate (Fru 1,6-P2) and sedoheptulose 1,7-bisphosphate (Sed 1,7-P2) to fructose 6-phosphate and sedoheptulose 7-phosphate, respectively. The sequence is that of D-fructose 1,6-bisphosphatase class 2/sedoheptulose 1,7-bisphosphatase from Trichodesmium erythraeum (strain IMS101).